Here is a 434-residue protein sequence, read N- to C-terminus: MRDKTGPKFGPYQPDDEAVSPSRRRLILGMGMVSGALVLGGAKTAQAADCRSPDVAGTQDERWQKQPFYGQHQAGVLTPQQAAMMLVAFDVLATDKTSLIRLFKLLTERLAFLTTGGRAPSVNAKLPPLDSGIMGPEIYPDNLTVTVSVGNALFDERFGLQGQKPLRLQRMTRFPNDSLDAGLCHGDVMLQICANTNETVIHALRDIIKHTPDLLSVRWKREGFISAHAARSKGQETPINLLGFKDGTANPKISNKPLINNVVWVSNNAGEPAWAVGGSYQVVRIIRFKVEFWDRTPLQEQQTIFGRDKNSGAPLGMQHEHDEPNYAKDPEGKVIPMDAHIRLANPRTIETQRNLMLRRGYSYSLGVSNSGQLDMGLLFVCYQSDLAQAFLTVQERLNGEALEEYVKPIGGGYFFTLPGVADANHYLAQSLLEA.

Residues 1–45 (MRDKTGPKFGPYQPDDEAVSPSRRRLILGMGMVSGALVLGGAKTA) constitute a signal peptide (tat-type signal). Heme b contacts are provided by residues 247-249 (GTA), histidine 340, 345-347 (NPR), and arginine 358.

Belongs to the DyP-type peroxidase family. EfeB subfamily. As to quaternary structure, homodimer. Part of a ferrous iron transporter composed of EfeU, EfeO and EfeB. Heme b serves as cofactor. Predicted to be exported by the Tat system. The position of the signal peptide cleavage has not been experimentally proven.

The protein localises to the periplasm. The enzyme catalyses heme b + 2 H(+) = protoporphyrin IX + Fe(2+). Its function is as follows. Involved in the recovery of exogenous heme iron. Extracts iron from heme while preserving the protoporphyrin ring intact. This is Deferrochelatase (efeB) from Yersinia pseudotuberculosis serotype I (strain IP32953).